We begin with the raw amino-acid sequence, 816 residues long: Mechanosensitive cation channel TMEM63B (816 aa).

Residues 1 to 46 (MLPYVIATLGSAGSTCKASTCSNSTKDYCYSARIRSTVLQGLPFGG) are Extracellular-facing. A helical transmembrane segment spans residues 47–71 (VPTVLALDFMCFLALLFVFSILRKV). Residues Cys57 and Cys119 are each lipidated (S-palmitoyl cysteine). The Cytoplasmic segment spans residues 72–138 (AWDYGRLALV…KDDEIRDKCG (67 aa)). Residues 139–171 (GDAVHYLSFQRHIIGLLVAVGVLSVGIVLPVNF) form a helical membrane-spanning segment. The Extracellular portion of the chain corresponds to 172–195 (SGDLLENNAYSFGRTTIANLNSGN). Residues 196–220 (NLLWLHTSFAFLYLLLTVYSMRRHT) traverse the membrane as a helical segment. The Cytoplasmic portion of the chain corresponds to 221–420 (SKMRYKEDDL…IYWEHLSIRG (200 aa)). The interval 224 to 419 (RYKEDDLVKR…NIYWEHLSIR (196 aa)) is intracellular linker IL2; confers mechanosensitivity. 2 S-palmitoyl cysteine lipidation sites follow: Cys375 and Cys391. Residues 421–450 (FIWWIRCLVINVVLFILLFFLTTPAIIITT) traverse the membrane as a helical segment. Residues 451–465 (MDKFNVTKPVEYLNN) are Extracellular-facing. Residues 466-495 (PIITQFFPTLLLWCFSALLPTIVYYSAFFE) form a helical membrane-spanning segment. Residues 496 to 499 (AHWT) lie on the Cytoplasmic side of the membrane. Residues 500-536 (RSGENRTTMHKCYTFLIFMVLLLPSLGLSSLDVFFRW) form a helical membrane-spanning segment. The Extracellular portion of the chain corresponds to 537–559 (LFDKKFLAEAAVRFECVFLPDNG). A helical transmembrane segment spans residues 560–592 (AFFVNYVIASAFIGNAMDLLRIPGLLMYMIRLC). The segment at 560–592 (AFFVNYVIASAFIGNAMDLLRIPGLLMYMIRLC) is gating helix. At 593–612 (LARSAAERRNVKRHQAYEFQ) the chain is on the cytoplasmic side. Residues 613 to 631 (FGAAYAWMMCVFTVVMTYS) form a helical membrane-spanning segment. Over 632-634 (ITC) the chain is Extracellular. Residues 635–659 (PIIVPFGLMYMLLKHLVDRYNLYYA) form a helical membrane-spanning segment. Over 660–666 (YLPAKLD) the chain is Cytoplasmic. The helical transmembrane segment at 667–695 (KKIHSGAVNQVVAAPILCLFWLLFFSTMR) threads the bilayer. Over 696-700 (TGFLA) the chain is Extracellular. Residues 701-721 (PTSMFTFVVLVITIVICLCHV) traverse the membrane as a helical segment. S-palmitoyl cysteine attachment occurs at residues Cys719 and Cys722. Residues 722 to 816 (CFGHFKYLSA…DSLIENEIRQ (95 aa)) are Cytoplasmic-facing.

Belongs to the CSC1 (TC 1.A.17) family. As to quaternary structure, monomer. Palmitoylation is required for localization to the plasma membrane and stability.

The protein localises to the cell membrane. It is found in the lysosome membrane. It localises to the early endosome membrane. The catalysed reaction is Ca(2+)(in) = Ca(2+)(out). It carries out the reaction Mg(2+)(in) = Mg(2+)(out). It catalyses the reaction K(+)(in) = K(+)(out). The enzyme catalyses Na(+)(in) = Na(+)(out). The catalysed reaction is Cs(+)(in) = Cs(+)(out). Functionally, mechanosensitive cation channel with low conductance and high activation threshold. Osmosensitive cation channel preferentially activated by hypotonic stress. Also acts as a phospholipid scramblase in response to changes in membrane structure: upon changes in membrane curvature and thickness, alters its conformation and translocates phospholipids, thereby controlling plasma membrane lipid distribution. This chain is Mechanosensitive cation channel TMEM63B, found in Gallus gallus (Chicken).